The following is a 257-amino-acid chain: Phosphate import ATP-binding protein PstB (257 aa).

The ABC transporter domain occupies 5–246 (LEIKDLTAFY…EVIFTSPKNE (242 aa)). Residue 37–44 (GPSGCGKS) coordinates ATP.

The protein belongs to the ABC transporter superfamily. Phosphate importer (TC 3.A.1.7) family. The complex is composed of two ATP-binding proteins (PstB), two transmembrane proteins (PstC and PstA) and a solute-binding protein (PstS).

The protein localises to the cell membrane. The enzyme catalyses phosphate(out) + ATP + H2O = ADP + 2 phosphate(in) + H(+). Its function is as follows. Part of the ABC transporter complex PstSACB involved in phosphate import. Responsible for energy coupling to the transport system. This is Phosphate import ATP-binding protein PstB from Tropheryma whipplei (strain TW08/27) (Whipple's bacillus).